A 237-amino-acid polypeptide reads, in one-letter code: Putative glutathione-dependent formaldehyde-activating enzyme (237 aa).

The CENP-V/GFA domain maps to 38–152; it reads ITLICHCPPS…LGQSGGSEGE (115 aa). Zn(2+)-binding residues include Cys-42, Cys-44, Cys-67, Cys-69, Cys-72, Cys-114, and Cys-117.

This sequence belongs to the Gfa family. Zn(2+) serves as cofactor.

It carries out the reaction S-(hydroxymethyl)glutathione = glutathione + formaldehyde. The protein operates within one-carbon metabolism; formaldehyde degradation; formate from formaldehyde (glutathione route): step 1/3. Catalyzes the condensation of formaldehyde and glutathione to S-hydroxymethylglutathione. The polypeptide is Putative glutathione-dependent formaldehyde-activating enzyme (Sordaria macrospora (strain ATCC MYA-333 / DSM 997 / K(L3346) / K-hell)).